A 1220-amino-acid chain; its full sequence is Plasma membrane calcium-transporting ATPase 1 (1220 aa).

Gly2 bears the N-acetylglycine mark. Residues 2-105 (GDMANNSVVY…KTFLQLVWEA (104 aa)) lie on the Cytoplasmic side of the membrane. 2 positions are modified to phosphoserine: Ser8 and Ser17. Residues 106 to 126 (LQDVTLIILEIAAIVSLGLSF) traverse the membrane as a helical segment. Over 127–154 (YQPPEGDNALCGEVSVGEEEGEGETGWI) the chain is Extracellular. Residues 155–175 (EGAAILLSVVCVVLVTAFNDW) form a helical membrane-spanning segment. At 176 to 366 (SKEKQFRGLQ…KEKSVLQGKL (191 aa)) the chain is on the cytoplasmic side. Residues 297 to 356 (EEEKKDEKKKEKKNKKQDGAIENRNKAKAQDGEPMEMQPLKSEEGGDGDEKDKKKANLPK) form a disordered region. Composition is skewed to basic and acidic residues over residues 312–327 (KQDG…KAQD) and 337–356 (KSEE…NLPK). Position 338 is a phosphoserine (Ser338). The chain crosses the membrane as a helical span at residues 367 to 386 (TKLAVQIGKAGLLMSAITVI). Topologically, residues 387–418 (ILVLYFLIDTFWVQKRPWLAECTPIYIQYFVK) are extracellular. The chain crosses the membrane as a helical span at residues 419-439 (FFIIGVTVLVVAVPEGLPLPV). At 440 to 855 (TISLAYSVNE…RNVYDSISKF (416 aa)) the chain is on the cytoplasmic side. The active-site 4-aspartylphosphate intermediate is the Asp475. Mg(2+) is bound by residues Asp475, Thr477, and Asp797. The helical transmembrane segment at 856-876 (LQFQLTVNVVAVIVAFTGACI) threads the bilayer. Over 877 to 882 (TQDSPL) the chain is Extracellular. The helical transmembrane segment at 883-903 (KAVQMLWVNLIMDTLASLALA) threads the bilayer. Residues 904-927 (TEPPTESLLLGKPYGRNKPLISRT) are Cytoplasmic-facing. Residues 928–948 (MMKNILGHAFYQLVVVFTLLL) form a helical membrane-spanning segment. Residues 949–971 (AGEKFFDIDSGRNAPLHAPPSEH) lie on the Extracellular side of the membrane. The helical transmembrane segment at 972 to 991 (YTIVFNIFVLMQLFNEINAR) threads the bilayer. At 992-1005 (KIHGERNVFEGIFN) the chain is on the cytoplasmic side. Residues 1006–1027 (NAIFCTIVLGTFVVQIIIVQFA) form a helical membrane-spanning segment. Residues 1028–1039 (GKPFSCSELSVE) lie on the Extracellular side of the membrane. A helical membrane pass occupies residues 1040–1060 (QWLWSIFLGMGTLLWGQLIST). Residues 1061–1220 (IPTSRLKFQK…SPLHSLETSL (160 aa)) are Cytoplasmic-facing. The segment at 1100–1117 (LRRWQILWFRGLNRIQTQ) is calmodulin-binding subdomain A. Thr1116 is subject to Phosphothreonine; by PKC. Residues 1118–1220 (IRVVNAFRSS…SPLHSLETSL (103 aa)) form a required for basolateral membrane targeting region. A phosphoserine mark is found at Ser1140 and Ser1155. The tract at residues 1160-1220 (PLIDDTDAED…SPLHSLETSL (61 aa)) is disordered. Thr1165 is modified (phosphothreonine). The residue at position 1177 (Ser1177) is a Phosphoserine; by PKA. Phosphoserine occurs at positions 1178 and 1182. Positions 1200 to 1220 (MNKSATSSSPGSPLHSLETSL) are enriched in polar residues.

It belongs to the cation transport ATPase (P-type) (TC 3.A.3) family. Type IIB subfamily. In terms of assembly, monomer. Dimer. Oligomer. Calmodulin binding. Interacts with PDZD11. Interacts with SLC35G1 and STIM1. Interacts with YWHAE; interacts with the monomeric and dimeric forms of the YWHAE but prefer the monomer form; this interaction inhibits calcium-transporting ATPase activity. Interacts with NPTN; this interaction stabilizes ATP2B1 and increases ATPase activity; this interaction controls T cell calcium homeostasis following T cell activation. Interacts with EPB41; regulates small intestinal calcium absorption through regulation of membrane expression of ATP2B1. Isoform B is ubiquitously expressed and is the most predominant isoform. Isoform C is expressed at much lower levels in all tissues tested, but liver, while isoform A is found only in aorta, brain and stomach.

The protein localises to the cell membrane. It is found in the basolateral cell membrane. Its subcellular location is the synapse. It localises to the presynaptic cell membrane. The protein resides in the cytoplasmic vesicle. The protein localises to the secretory vesicle. It is found in the synaptic vesicle membrane. It catalyses the reaction Ca(2+)(in) + ATP + H2O = Ca(2+)(out) + ADP + phosphate + H(+). Catalyzes the hydrolysis of ATP coupled with the transport of calcium from the cytoplasm to the extracellular space thereby maintaining intracellular calcium homeostasis. Plays a role in blood pressure regulation through regulation of intracellular calcium concentration and nitric oxide production leading to regulation of vascular smooth muscle cells vasoconstriction. Positively regulates bone mineralization through absorption of calcium from the intestine. Plays dual roles in osteoclast differentiation and survival by regulating RANKL-induced calcium oscillations in preosteoclasts and mediating calcium extrusion in mature osteoclasts. Regulates insulin sensitivity through calcium/calmodulin signaling pathway by regulating AKT1 activation and NOS3 activation in endothelial cells. May play a role in synaptic transmission by modulating calcium and proton dynamics at the synaptic vesicles. The sequence is that of Plasma membrane calcium-transporting ATPase 1 from Oryctolagus cuniculus (Rabbit).